The sequence spans 93 residues: Alpha-conotoxin RVIIIA (93 aa).

The first 20 residues, 1–20 (MMSKMGAMFVLLLLFTLASS), serve as a signal peptide directing secretion. Residues 21-46 (QQEGDVQARKTHPKREFQRILLRSGR) constitute a propeptide that is removed on maturation. Residues Glu-63 and Glu-68 each carry the 4-carboxyglutamate modification.

In terms of processing, contains 5 disulfide bonds. Expressed by the venom duct.

The protein localises to the secreted. In terms of biological role, alpha-conotoxins act on postsynaptic membranes, they bind to the nicotinic acetylcholine receptors (nAChR) and thus inhibit them. This toxin provokes a nearly complete and slowly reversible inhibition of both the human adult (alpha-1-beta-1-epsilon-delta (CHRNA1-CHRNB1-CHRND-CHRNE)) and human fetal (alpha-1-beta-1-gamma-delta (CHRNA1-CHRNB1-CHRNG-CHRND)) neuromuscular nAChRs. It also reversibly blocks the neuromuscular alpha-7/CHRNA7 nAChR, the alpha-3-beta-2 (CHRNA3-CHRNB2) nAChR, the chimeric alpha-6 or -3/beta-3 or -2 (CHRNA6/CHRNA3-CHRNB2-CHRNB3) nAChR and with a low potency the alpha-4-beta-2 (CHRNA4-CHRNB2) nAChR. In addition, the toxin also inhibits the alpha-9-alpha-10 (CHRNA9-CHRNA10) nAChR with a high potency (IC(50)=187 nM). This is Alpha-conotoxin RVIIIA from Conus radiatus (Rayed cone).